Here is a 215-residue protein sequence, read N- to C-terminus: Small ribosomal subunit protein uS3 (215 aa).

A KH type-2 domain is found at 39 to 107; it reads VRQYLQKRLA…PVHINIEEIR (69 aa).

Belongs to the universal ribosomal protein uS3 family. Part of the 30S ribosomal subunit. Forms a tight complex with proteins S10 and S14.

Binds the lower part of the 30S subunit head. Binds mRNA in the 70S ribosome, positioning it for translation. This is Small ribosomal subunit protein uS3 from Nitrosomonas eutropha (strain DSM 101675 / C91 / Nm57).